Here is a 309-residue protein sequence, read N- to C-terminus: Ribonuclease Z (309 aa).

Zn(2+)-binding residues include His-63, His-65, Asp-67, His-68, His-141, Asp-208, and His-266. The active-site Proton acceptor is Asp-67.

Belongs to the RNase Z family. In terms of assembly, homodimer. Zn(2+) serves as cofactor.

The catalysed reaction is Endonucleolytic cleavage of RNA, removing extra 3' nucleotides from tRNA precursor, generating 3' termini of tRNAs. A 3'-hydroxy group is left at the tRNA terminus and a 5'-phosphoryl group is left at the trailer molecule.. Functionally, zinc phosphodiesterase, which displays some tRNA 3'-processing endonuclease activity. Probably involved in tRNA maturation, by removing a 3'-trailer from precursor tRNA. In Salinispora arenicola (strain CNS-205), this protein is Ribonuclease Z.